Reading from the N-terminus, the 243-residue chain is Uridine-cytidine kinase B (243 aa).

Position 22–29 (22–29) interacts with ATP; the sequence is GGTASGKT.

This sequence belongs to the uridine kinase family.

It catalyses the reaction uridine + ATP = UMP + ADP + H(+). The catalysed reaction is cytidine + ATP = CMP + ADP + H(+). Its pathway is pyrimidine metabolism; CTP biosynthesis via salvage pathway; CTP from cytidine: step 1/3. The protein operates within pyrimidine metabolism; UMP biosynthesis via salvage pathway; UMP from uridine: step 1/1. In terms of biological role, catalyzes the conversion of uridine into uridine monophosphate and cytidine into cytidine monophosphate in the pyrimidine salvage pathway. The polypeptide is Uridine-cytidine kinase B (udkB) (Dictyostelium discoideum (Social amoeba)).